Here is a 227-residue protein sequence, read N- to C-terminus: MASPSRQPPLGGSGLLRGSRARSYGSLVQSSCSPVRERRLEHQLEPGDTLAGLALKYGVTMEQIKRTNRLYTNDSIFLKKTLYIPILTEPRDLFNGLDSEEEENDGEEEVRPSKDEIGSSSGKRKNQGSASSQPKGTGLPPHQGTSTPSHDLSASDFLKKLDSQISLSKKAAAQKLRKGESGVPEEDTGLYPSSPRMQQRAVLGPVPLTRTSRTQTLRDQEDEIFKL.

Phosphoserine occurs at positions 23 and 33. A LysM domain is found at 40–84 (LEHQLEPGDTLAGLALKYGVTMEQIKRTNRLYTNDSIFLKKTLYI). The tract at residues 95 to 157 (NGLDSEEEEN…PSHDLSASDF (63 aa)) is disordered. The segment covering 98 to 108 (DSEEEENDGEE) has biased composition (acidic residues). The residue at position 99 (Ser99) is a Phosphoserine. The segment covering 143 to 152 (QGTSTPSHDL) has biased composition (polar residues). Phosphoserine is present on residues Ser166, Ser181, Ser194, and Ser212. The disordered stretch occupies residues 169–227 (KKAAAQKLRKGESGVPEEDTGLYPSSPRMQQRAVLGPVPLTRTSRTQTLRDQEDEIFKL). Residues 216–227 (TLRDQEDEIFKL) are compositionally biased toward basic and acidic residues.

This is LysM and putative peptidoglycan-binding domain-containing protein 1 (Lysmd1) from Rattus norvegicus (Rat).